Reading from the N-terminus, the 89-residue chain is Small ribosomal subunit protein uS15 (89 aa).

It belongs to the universal ribosomal protein uS15 family. As to quaternary structure, part of the 30S ribosomal subunit. Forms a bridge to the 50S subunit in the 70S ribosome, contacting the 23S rRNA.

One of the primary rRNA binding proteins, it binds directly to 16S rRNA where it helps nucleate assembly of the platform of the 30S subunit by binding and bridging several RNA helices of the 16S rRNA. In terms of biological role, forms an intersubunit bridge (bridge B4) with the 23S rRNA of the 50S subunit in the ribosome. In Syntrophobacter fumaroxidans (strain DSM 10017 / MPOB), this protein is Small ribosomal subunit protein uS15.